The primary structure comprises 63 residues: LTPNDPLYSQQWGLSGTYGIRANTAWDNGYQGQGKIIAVVDTGITDHPDLLANRTSPLGYDFI.

One can recognise a Peptidase S8 domain in the interval 11 to 63; that stretch reads QWGLSGTYGIRANTAWDNGYQGQGKIIAVVDTGITDHPDLLANRTSPLGYDFI.

This sequence belongs to the peptidase S8 family. In terms of assembly, heterodimer of a large and a small chain.

It localises to the secreted. In Achromobacter lyticus, this protein is Protease 2 small chain.